A 1181-amino-acid chain; its full sequence is 1-phosphatidylinositol 4,5-bisphosphate phosphodiesterase beta-2 (1181 aa).

Residues 312 to 463 (QDMTQPLNHY…LRGKILIKNK (152 aa)) form the PI-PLC X-box domain. The active site involves His-327. Asn-328, Glu-357, and Asp-359 together coordinate Ca(2+). His-374 is an active-site residue. Glu-408 provides a ligand contact to Ca(2+). The tract at residues 465–534 (NQFSGPASPS…EEIKKMQSDE (70 aa)) is disordered. Positions 503–525 (TEVEEEEVVEEEEEEESGNLDEE) are enriched in acidic residues. The region spanning 547–663 (MSSLVNYIQP…GYLLKHEFMR (117 aa)) is the PI-PLC Y-box domain. The 126-residue stretch at 666 to 791 (DKQFNPFSVD…CLRSESNMAL (126 aa)) folds into the C2 domain. The interval 847–890 (SGTPVASQSNGAPVSAGNGSTAPGTKATGEEATKEVTEPQTASL) is disordered. The span at 850-869 (PVASQSNGAPVSAGNGSTAP) shows a compositional bias: polar residues. The segment covering 874–883 (TGEEATKEVT) has biased composition (basic and acidic residues). Residues 893–940 (LRELKGVVKLQRRHEKELRELERRGARRWEELLQRGAAQLAELQTQAA) are a coiled coil. Ser-950 carries the post-translational modification Phosphoserine. 2 coiled-coil regions span residues 974–1026 (PRVQ…AELK) and 1075–1141 (HIQE…VRAY). Positions 1149-1181 (EAEDKPERSCEASEESCPQEPLVSKADTQESRL) are disordered. The segment covering 1150-1159 (AEDKPERSCE) has biased composition (basic and acidic residues).

In terms of assembly, interacts with RAC1. Forms a complex composed of at least WDR26, a G-beta:gamma unit, and PLCB2. It depends on Ca(2+) as a cofactor.

The enzyme catalyses a 1,2-diacyl-sn-glycero-3-phospho-(1D-myo-inositol-4,5-bisphosphate) + H2O = 1D-myo-inositol 1,4,5-trisphosphate + a 1,2-diacyl-sn-glycerol + H(+). It catalyses the reaction a 1,2-diacyl-sn-glycero-3-phospho-(1D-myo-inositol) + H2O = 1D-myo-inositol 1-phosphate + a 1,2-diacyl-sn-glycerol + H(+). The production of the second messenger molecules diacylglycerol (DAG) and inositol 1,4,5-trisphosphate (IP3) is mediated by activated phosphatidylinositol-specific phospholipase C enzymes. In neutrophils, participates in a phospholipase C-activating N-formyl peptide-activated GPCR (G protein-coupled receptor) signaling pathway by promoting RASGRP4 activation by DAG, to promote neutrophil functional responses. In Mus musculus (Mouse), this protein is 1-phosphatidylinositol 4,5-bisphosphate phosphodiesterase beta-2.